A 233-amino-acid chain; its full sequence is Biosynthetic peptidoglycan transglycosylase (233 aa).

Residues 8–28 traverse the membrane as a helical segment; that stretch reads LIALPVGIFIFFNAYVYGNII.

The protein belongs to the glycosyltransferase 51 family.

It is found in the cell inner membrane. It catalyses the reaction [GlcNAc-(1-&gt;4)-Mur2Ac(oyl-L-Ala-gamma-D-Glu-L-Lys-D-Ala-D-Ala)](n)-di-trans,octa-cis-undecaprenyl diphosphate + beta-D-GlcNAc-(1-&gt;4)-Mur2Ac(oyl-L-Ala-gamma-D-Glu-L-Lys-D-Ala-D-Ala)-di-trans,octa-cis-undecaprenyl diphosphate = [GlcNAc-(1-&gt;4)-Mur2Ac(oyl-L-Ala-gamma-D-Glu-L-Lys-D-Ala-D-Ala)](n+1)-di-trans,octa-cis-undecaprenyl diphosphate + di-trans,octa-cis-undecaprenyl diphosphate + H(+). Its pathway is cell wall biogenesis; peptidoglycan biosynthesis. Peptidoglycan polymerase that catalyzes glycan chain elongation from lipid-linked precursors. The polypeptide is Biosynthetic peptidoglycan transglycosylase (Neisseria gonorrhoeae (strain ATCC 700825 / FA 1090)).